A 174-amino-acid chain; its full sequence is V-type proton ATPase catalytic subunit A (174 aa).

Belongs to the ATPase alpha/beta chains family. V-ATPase is a heteromultimeric enzyme made up of two complexes: the ATP-hydrolytic V1 complex and the proton translocation V0 complex. The V1 complex consists of three catalytic AB heterodimers that form a heterohexamer, three peripheral stalks each consisting of EG heterodimers, one central rotor including subunits D and F, and the regulatory subunits C and H. The proton translocation complex V0 consists of the proton transport subunit a, a ring of proteolipid subunits c9c'', rotary subunit d, subunits e and f, and the accessory subunits ATP6AP1/Ac45 and ATP6AP2/PRR. Interacts with the V0 complex V-ATPase subunit a4 ATP6V0A4. Interacts with WFS1. Interacts with alpha-crystallin B chain/CRYAB and with MTOR, forming a ternary complex.

The protein resides in the cytoplasm. The protein localises to the cytosol. Its subcellular location is the cytoplasmic vesicle. It is found in the secretory vesicle. It localises to the clathrin-coated vesicle membrane. The protein resides in the lysosome. The catalysed reaction is ATP + H2O + 4 H(+)(in) = ADP + phosphate + 5 H(+)(out). ATP hydrolysis occurs at the interface between the nucleotide-binding domains of subunits A and B. ATP hydrolysis triggers a conformational change in the subunits D and F, which induces a shift of subunit d. The c-ring is subsequently rotated and results in a continuous proton translocation across the membrane. Catalytic subunit of the V1 complex of vacuolar(H+)-ATPase (V-ATPase), a multisubunit enzyme composed of a peripheral complex (V1) that hydrolyzes ATP and a membrane integral complex (V0) that translocates protons. V-ATPase is responsible for acidifying and maintaining the pH of intracellular compartments and in some cell types, is targeted to the plasma membrane, where it is responsible for acidifying the extracellular environment. In aerobic conditions, involved in intracellular iron homeostasis, thus triggering the activity of Fe(2+) prolyl hydroxylase (PHD) enzymes, and leading to HIF1A hydroxylation and subsequent proteasomal degradation. May play a role in neurite development and synaptic connectivity. The protein is V-type proton ATPase catalytic subunit A of Mesocricetus auratus (Golden hamster).